Reading from the N-terminus, the 946-residue chain is Nitrogen permease regulator 3 (946 aa).

The N-terminal stretch at 1 to 21 is a signal peptide; sequence MNEFLPDSCLLGVMLAVSSHS. 3 disordered regions span residues 48–171, 283–334, and 813–849; these read LGTT…KDNG, SGNW…PESS, and RRRQEDNVDNKLLSTDENANEPPKSTKVDINDNTLEG. The span at 79–88 shows a compositional bias: basic and acidic residues; the sequence is SDLHSSKMER. Over residues 91-125 the composition is skewed to low complexity; that stretch reads SSSSSSSLSSPSSGLSDSELSTDYADWSTSGSSSD. The span at 146–163 shows a compositional bias: polar residues; sequence ARSTRNVSPVSMSRNTSL. Residues 287-301 show a composition bias toward basic residues; it reads RKSRKRNNSLSKSKR. Residues 324–333 are compositionally biased toward polar residues; the sequence is SAETPNSPES. Positions 836 to 849 are enriched in basic and acidic residues; that stretch reads KSTKVDINDNTLEG.

The protein belongs to the NPR3 family.

Its function is as follows. Mediates inactivation of the TORC1 complex in response to amino acid starvation. Required for meiotic nuclear division. The sequence is that of Nitrogen permease regulator 3 (NPR3) from Candida glabrata (strain ATCC 2001 / BCRC 20586 / JCM 3761 / NBRC 0622 / NRRL Y-65 / CBS 138) (Yeast).